A 121-amino-acid chain; its full sequence is Large ribosomal subunit protein uL18 (121 aa).

It belongs to the universal ribosomal protein uL18 family. As to quaternary structure, part of the 50S ribosomal subunit; part of the 5S rRNA/L5/L18/L25 subcomplex. Contacts the 5S and 23S rRNAs.

In terms of biological role, this is one of the proteins that bind and probably mediate the attachment of the 5S RNA into the large ribosomal subunit, where it forms part of the central protuberance. The protein is Large ribosomal subunit protein uL18 of Paraburkholderia phytofirmans (strain DSM 17436 / LMG 22146 / PsJN) (Burkholderia phytofirmans).